A 172-amino-acid polypeptide reads, in one-letter code: MIRIPFHLRQTPGRTLHSLVRSFASTKPADLSGTQEKSTRQKINFHELKHPSKVPQRPHKSTIDGQSTPTRIPVDAQKGQLLERLSLVDLDSAEAHRTLEDAIEFASQILSVDTDDVEPLYTVLERERLTLREDRVSDGNIQQDVLRNARVTEEENFVAPPENIPLEQEPRK.

The transit peptide at 1 to 23 (MIRIPFHLRQTPGRTLHSLVRSF) directs the protein to the mitochondrion. Positions 51–73 (PSKVPQRPHKSTIDGQSTPTRIP) are disordered.

Belongs to the GatC family. Subunit of the heterotrimeric GatCAB amidotransferase (AdT) complex, composed of A, B and C subunits.

Its subcellular location is the mitochondrion. The catalysed reaction is L-glutamyl-tRNA(Gln) + L-glutamine + ATP + H2O = L-glutaminyl-tRNA(Gln) + L-glutamate + ADP + phosphate + H(+). Allows the formation of correctly charged Gln-tRNA(Gln) through the transamidation of misacylated Glu-tRNA(Gln) in the mitochondria. The reaction takes place in the presence of glutamine and ATP through an activated gamma-phospho-Glu-tRNA(Gln). The polypeptide is Glutamyl-tRNA(Gln) amidotransferase subunit C-4, mitochondrial (Culex quinquefasciatus (Southern house mosquito)).